The sequence spans 255 residues: ATP synthase subunit a (255 aa).

Positions 1-7 (MMFNNII) are cleaved as a propeptide — removed in mature form. The next 6 membrane-spanning stretches (helical) occupy residues 35 to 55 (FGFY…LITY), 91 to 111 (YFPF…LGLI), 120 to 140 (HFIL…ILGF), 147 to 167 (FFSL…LVLI), 177 to 197 (VSLG…LVIL), and 208 to 228 (GIFY…FSGL).

Belongs to the ATPase A chain family. As to quaternary structure, F-type ATPases have 2 components, CF(1) - the catalytic core - and CF(0) - the membrane proton channel. CF(1) has five subunits: alpha(3), beta(3), gamma(1), delta(1), epsilon(1). CF(0) has three main subunits: a, b and c.

It localises to the mitochondrion inner membrane. Mitochondrial membrane ATP synthase (F(1)F(0) ATP synthase or Complex V) produces ATP from ADP in the presence of a proton gradient across the membrane which is generated by electron transport complexes of the respiratory chain. F-type ATPases consist of two structural domains, F(1) - containing the extramembraneous catalytic core and F(0) - containing the membrane proton channel, linked together by a central stalk and a peripheral stalk. During catalysis, ATP synthesis in the catalytic domain of F(1) is coupled via a rotary mechanism of the central stalk subunits to proton translocation. Key component of the proton channel; it may play a direct role in the translocation of protons across the membrane. The sequence is that of ATP synthase subunit a (ATP6) from Trichophyton rubrum (Athlete's foot fungus).